We begin with the raw amino-acid sequence, 709 residues long: ATP-binding cassette sub-family F member 3 (709 aa).

Alanine 2 carries the post-translational modification N-acetylalanine. The span at 129 to 143 shows a compositional bias: basic and acidic residues; sequence RLKAKQEKRSEKETL. The segment at 129–171 is disordered; the sequence is RLKAKQEKRSEKETLKTSSPLVLEEASASQAGSRKESRLESSG. Residues serine 155, serine 157, and serine 161 each carry the phosphoserine modification. Residues 161-171 are compositionally biased toward basic and acidic residues; it reads SRKESRLESSG. ABC transporter domains lie at 178-424 and 492-707; these read VRIE…LNQQ and LQLD…RREG. Position 210–217 (210–217) interacts with ATP; that stretch reads GRNGLGKT. The residue at position 283 (serine 283) is a Phosphoserine. 525 to 532 provides a ligand contact to ATP; it reads GENGAGKS.

It belongs to the ABC transporter superfamily. ABCF family. EF3 subfamily.

Displays an antiviral effect against flaviviruses such as west Nile virus (WNV) in the presence of OAS1B. The sequence is that of ATP-binding cassette sub-family F member 3 (Abcf3) from Rattus norvegicus (Rat).